Consider the following 220-residue polypeptide: Probable metallo-hydrolase YybB (220 aa).

Zn(2+) contacts are provided by H67, H69, D71, H72, H139, D158, and H200.

Belongs to the metallo-beta-lactamase superfamily. The cofactor is Zn(2+).

The polypeptide is Probable metallo-hydrolase YybB (yybB) (Bacillus subtilis (strain 168)).